The chain runs to 331 residues: Putative ankyrin repeat protein FPV012 (331 aa).

ANK repeat units follow at residues 11-40, 44-73, 77-106, and 110-139; these read DGYT…NPNT, DSYT…NVDK, DGYT…NPNY, and YGIT…NCNQ.

This Vertebrata (FPV) protein is Putative ankyrin repeat protein FPV012.